Here is a 761-residue protein sequence, read N- to C-terminus: Disintegrin and metalloproteinase domain-containing protein 24 (761 aa).

Residues 1-34 form the signal peptide; sequence MVAMSEALVHARITLLQAWLRMLLFSSVWPPTWC. Residues 35–200 constitute a propeptide that is removed on maturation; that stretch reads AEYKGPPETV…GKSTRMQSIY (166 aa). Over 35–697 the chain is Extracellular; that stretch reads AEYKGPPETV…SKKDAPEKPN (663 aa). Residue N140 is glycosylated (N-linked (GlcNAc...) asparagine). The Cysteine switch signature appears at 172–179; sequence MRCGLTDE. Zn(2+) is bound at residue C174. Residues 208–400 form the Peptidase M12B domain; the sequence is LYIKLALVID…KSCIHREPRP (193 aa). N-linked (GlcNAc...) asparagine glycans are attached at residues N227 and N301. Disulfide bonds link C323–C393, C357–C379, C359–C364, C465–C485, C635–C646, C640–C652, and C654–C663. H342 contacts Zn(2+). E343 is an active-site residue. Zn(2+) is bound by residues H346 and H352. N-linked (GlcNAc...) asparagine glycosylation is found at N378, N390, and N479. The Disintegrin domain occupies 406 to 493; it reads LKVCGNGIVE…ECPEDLFVQD (88 aa). The EGF-like domain occupies 631 to 664; the sequence is WVNDCTPETCNMKGVCNNKQHCHCDVGWSPPNCQ. Residues 698 to 718 traverse the membrane as a helical segment; it reads VIIWLLPIICVAVVLSVLFCL. Residues 719 to 761 are Cytoplasmic-facing; it reads SGATKKSREAAASQPAEERVKPPYEGAEPSYETVKPPDEWANP. The segment at 725–761 is disordered; sequence SREAAASQPAEERVKPPYEGAEPSYETVKPPDEWANP.

Monomer. Requires Zn(2+) as cofactor. In terms of processing, the prodomain is removed during sperm passage through the caput epididymis after the protein has reached the cell surface. Not processed in the secretory pathway. In terms of tissue distribution, expressed exclusively in testis and more specifically on the surface of mature sperm (at protein level).

It localises to the membrane. Plasma membrane protease present on mature sperm that may be involved in sperm function during epididymal maturation and/or fertilization. The sequence is that of Disintegrin and metalloproteinase domain-containing protein 24 from Mus musculus (Mouse).